The primary structure comprises 853 residues: Replication protein A 70 kDa DNA-binding subunit C (853 aa).

Residues 118–282 (PKEPGHSSIN…QSAYQPQQPP (165 aa)) are disordered. Composition is skewed to polar residues over residues 124-144 (SSIN…SEQQ), 159-173 (SANS…NSSD), 180-194 (SANS…SSSD), 201-211 (SANSPQRQVVH), 222-249 (PQVS…SSNA), and 263-278 (TATT…AYQP). A DNA-binding region (OB) is located at residues 312–399 (WTIKVRVTSK…NDYEIHLDSA (88 aa)). The C4-type zinc finger occupies 602-628 (CPIMNGDRPCSKKVTNNGDGTWRCEKC).

Belongs to the replication factor A protein 1 family. In terms of assembly, heterotrimer of RPA1, RPA2 and RPA3 (canonical replication protein A complex).

The protein localises to the nucleus. Its function is as follows. Component of the replication protein A complex (RPA) required for DNA recombination, repair and replication. The activity of RPA is mediated by single-stranded DNA binding and protein interactions. Probably involved in repair of double-strand DNA breaks (DSBs) induced by genotoxic stresses. The sequence is that of Replication protein A 70 kDa DNA-binding subunit C (RPA1C) from Arabidopsis thaliana (Mouse-ear cress).